We begin with the raw amino-acid sequence, 220 residues long: Translation initiation factor IF-3 (220 aa).

The interval 182–220 (TPLVKKDDKEEPATRAVRTITAPPRPTSARLASKPAGNG) is disordered. Residues 185–194 (VKKDDKEEPA) are compositionally biased toward basic and acidic residues.

The protein belongs to the IF-3 family. Monomer.

It localises to the cytoplasm. Its function is as follows. IF-3 binds to the 30S ribosomal subunit and shifts the equilibrium between 70S ribosomes and their 50S and 30S subunits in favor of the free subunits, thus enhancing the availability of 30S subunits on which protein synthesis initiation begins. The protein is Translation initiation factor IF-3 of Synechococcus sp. (strain WH7803).